Here is a 528-residue protein sequence, read N- to C-terminus: NAC domain-containing protein 13 (528 aa).

In terms of domain architecture, NAC spans 10–160; the sequence is LAPGFRFHPT…AYVLYKIYKK (151 aa). Residues 107–166 mediate DNA binding; it reads VGEKKTLVFHRGRAPNGERTNWVMHEYTLHKEELKRCGGEDVKDAYVLYKIYKKSGSGPK. Positions 388-419 are disordered; that stretch reads EAPGTGDSSEFLNPVPSGISTTNEDDPSKDES. A helical transmembrane segment spans residues 499–519; it reads FFCLSIIGALCALFWVIIGTM.

As to quaternary structure, interacts with RCD1. As to expression, expressed in roots, rosette leaves, shoot apex, stems and flowers.

It localises to the endoplasmic reticulum membrane. Its subcellular location is the nucleus. In terms of biological role, transcriptional activator activated by proteolytic cleavage through regulated intramembrane proteolysis (RIP). Involved in oxidative stress tolerance by mediating regulation of mitochondrial retrograde signaling during mitochondrial dysfunction. Interacts directly with the mitochondrial dysfunction DNA consensus motif 5'-CTTGNNNNNCA[AC]G-3', a cis-regulatory elements of several mitochondrial retrograde regulation-induced genes, and triggers increased oxidative stress tolerance. The sequence is that of NAC domain-containing protein 13 from Arabidopsis thaliana (Mouse-ear cress).